Here is a 227-residue protein sequence, read N- to C-terminus: MEAMNMNIPRDAMFVPPPESEQNGYHEKSEVQQTSYMQSQVKVPHYNFPTPYFTTSFSAQELLGEGFQASISRISAVTEDMQSMEIPEFVEEARRDYAAKTRENEMLGQQYEKELERKSEAYRKHQEVEADKIRKELEKQHMRDIEFRKEIAELAIENQKRMIDLECRYAKKDMDRERTKVRMMLEQQKFHSDIQVNLDSSAAGTESGGHVVSQSEKFTERNREMKR.

Residues 1-28 are disordered; sequence MEAMNMNIPRDAMFVPPPESEQNGYHEK. Residues 90-140 adopt a coiled-coil conformation; that stretch reads VEEARRDYAAKTRENEMLGQQYEKELERKSEAYRKHQEVEADKIRKELEKQ. CAHS motif regions lie at residues 122-140 and 159-177; these read YRKH…LEKQ and QKRM…MDRE. Residues 198-227 form a disordered region; sequence LDSSAAGTESGGHVVSQSEKFTERNREMKR. Residues 217–227 show a composition bias toward basic and acidic residues; sequence KFTERNREMKR.

Belongs to the Cytosolic-abundant heat soluble protein (CAHS) family.

It localises to the cytoplasm. Its function is as follows. CAHS proteins are cytosolic heat soluble proteins that seem to contribute to the anhydrobiosis in tardigrades, but their specific mechanisms are yet to be identified. It is possible that protection during anhydrobiosis might occur via the stabilization of vitrifying small molecules such as sugars, but not via the direct glass transition of CAHS proteins themselves. The chain is Cytosolic-abundant heat soluble protein 106094 from Paramacrobiotus richtersi (Water bear).